Here is a 1469-residue protein sequence, read N- to C-terminus: ATP-binding cassette transporter abc4 (1469 aa).

The next 8 helical transmembrane spans lie at Ser21 to His40, Tyr55 to Thr74, His94 to Val114, Ala121 to Leu141, Val160 to Phe180, Tyr189 to Phe209, Ile296 to Ala316, and Trp337 to Phe357. An ABC transmembrane type-1 1 domain is found at Ile296–Gln580. Asn386 is a glycosylation site (N-linked (GlcNAc...) asparagine). 2 helical membrane passes run Glu412–Gln432 and Val441–Ala461. N-linked (GlcNAc...) asparagine glycosylation is present at Asn510. 2 consecutive transmembrane segments (helical) span residues Val524–Ile544 and Ile553–Tyr573. An ABC transporter 1 domain is found at Ile611–Glu840. A glycan (N-linked (GlcNAc...) asparagine) is linked at Asn615. Residue Gly648–Ser655 participates in ATP binding. N-linked (GlcNAc...) asparagine glycans are attached at residues Asn691, Asn790, and Asn815. The helical transmembrane segment at Gly894–Ile914 threads the bilayer. An ABC transmembrane type-1 2 domain is found at Val897–Ala1176. N-linked (GlcNAc...) asparagine glycosylation is present at Asn923. Residues Phe936–Val956 form a helical membrane-spanning segment. A glycan (N-linked (GlcNAc...) asparagine) is linked at Asn1007. The next 5 membrane-spanning stretches (helical) occupy residues Ser1009–Val1029, Met1033–Leu1053, Ile1065–Val1085, Val1120–Leu1140, and Gly1148–Val1168. Residues Phe1214 to Gly1453 form the ABC transporter 2 domain. Gly1246–Ser1253 is a binding site for ATP. Asn1355 is a glycosylation site (N-linked (GlcNAc...) asparagine).

This sequence belongs to the ABC transporter superfamily. ABCC family. Conjugate transporter (TC 3.A.1.208) subfamily.

It is found in the vacuole membrane. The catalysed reaction is ATP + H2O + xenobioticSide 1 = ADP + phosphate + xenobioticSide 2.. Its function is as follows. Involved in detoxification of xenobiotics, and vacuolar sequestration of glutathione S-conjugates. Together with abc2, required for accumulation of a red pigment (ade pigment) in the vacuole of a mutant affected in the adenine biosynthetic pathway. The sequence is that of ATP-binding cassette transporter abc4 from Schizosaccharomyces pombe (strain 972 / ATCC 24843) (Fission yeast).